The sequence spans 550 residues: (S)-beta-bisabolene synthase (550 aa).

4 residues coordinate Mg(2+): aspartate 303, aspartate 307, serine 451, and glutamate 455. Positions 303-307 match the DDXXD motif motif; it reads DDTYD.

It belongs to the terpene synthase family. Tpsa subfamily. The cofactor is Mg(2+). Requires Mn(2+) as cofactor. In terms of tissue distribution, expressed only in young rhizomes. Not detected in leaves, roots and mature rhizomes.

It catalyses the reaction (2E,6E)-farnesyl diphosphate = (S)-beta-bisabolene + diphosphate. Its function is as follows. Sesquiterpene synthase involved in the biosynthesis of bisabolene. The chain is (S)-beta-bisabolene synthase (TPS1) from Zingiber officinale (Ginger).